Consider the following 39-residue polypeptide: Natriuretic peptide CnNP-a (39 aa).

The propeptide occupies 1-8; that stretch reads SGSKTAKI. A disulfide bridge connects residues C12 and C28.

The protein belongs to the natriuretic peptide family. As to expression, expressed by the venom gland.

It localises to the secreted. Snake venom natriuretic peptide that targets both NPR1 and NPR2. Exhibits hypotensive and vasodepressor activities. The chain is Natriuretic peptide CnNP-a from Cryptophis nigrescens (Eastern small-eyed snake).